A 50-amino-acid polypeptide reads, in one-letter code: Sperm protamine P1 (50 aa).

It belongs to the protamine P1 family. As to quaternary structure, cross-linked by interchain disulfide bonds around the DNA-helix. As to expression, testis.

The protein resides in the nucleus. It is found in the chromosome. Its function is as follows. Protamines substitute for histones in the chromatin of sperm during the haploid phase of spermatogenesis. They compact sperm DNA into a highly condensed, stable and inactive complex. This Pan paniscus (Pygmy chimpanzee) protein is Sperm protamine P1 (PRM1).